Here is a 181-residue protein sequence, read N- to C-terminus: Large ribosomal subunit protein uL5c (181 aa).

It belongs to the universal ribosomal protein uL5 family. In terms of assembly, part of the 50S ribosomal subunit; contacts the 5S rRNA.

It localises to the plastid. The protein localises to the cyanelle. Binds 5S rRNA, forms part of the central protuberance of the 50S subunit. The sequence is that of Large ribosomal subunit protein uL5c (rpl5) from Cyanophora paradoxa.